The following is a 311-amino-acid chain: Meteorin-like protein (311 aa).

An N-terminal signal peptide occupies residues 1–45; it reads MRGVVWAARRRAGQQWPRSPGPGPGPPPPPPLLLLLLLLLGGASA. An intrachain disulfide couples Cys-52 to Cys-75. N-linked (GlcNAc...) asparagine glycosylation is present at Asn-103. Cystine bridges form between Cys-107/Cys-143, Cys-188/Cys-260, Cys-191/Cys-284, and Cys-201/Cys-306.

Belongs to the meteorin family. In terms of tissue distribution, abundantly expressed in adipose tissue.

It localises to the secreted. Hormone induced following exercise or cold exposure that promotes energy expenditure. Induced either in the skeletal muscle after exercise or in adipose tissue following cold exposure and is present in the circulation. Able to stimulate energy expenditure associated with the browning of the white fat depots and improves glucose tolerance. Does not promote an increase in a thermogenic gene program via direct action on adipocytes, but acts by stimulating several immune cell subtypes to enter the adipose tissue and activate their prothermogenic actions. Stimulates an eosinophil-dependent increase in IL4 expression and promotes alternative activation of adipose tissue macrophages, which are required for the increased expression of the thermogenic and anti-inflammatory gene programs in fat. Required for some cold-induced thermogenic responses, suggesting a role in metabolic adaptations to cold temperatures. This Rattus norvegicus (Rat) protein is Meteorin-like protein (Metrnl).